Reading from the N-terminus, the 91-residue chain is UPF0728 protein v1g117062 (91 aa).

It belongs to the UPF0728 family.

The protein is UPF0728 protein v1g117062 of Nematostella vectensis (Starlet sea anemone).